We begin with the raw amino-acid sequence, 354 residues long: Ferrochelatase (354 aa).

Residues His-191 and Glu-271 each coordinate Fe cation.

It belongs to the ferrochelatase family.

Its subcellular location is the cytoplasm. It catalyses the reaction heme b + 2 H(+) = protoporphyrin IX + Fe(2+). Its pathway is porphyrin-containing compound metabolism; protoheme biosynthesis; protoheme from protoporphyrin-IX: step 1/1. Its function is as follows. Catalyzes the ferrous insertion into protoporphyrin IX. This is Ferrochelatase from Rickettsia bellii (strain OSU 85-389).